A 267-amino-acid polypeptide reads, in one-letter code: Apolipoprotein A-I (267 aa).

The first 18 residues, 1-18, serve as a signal peptide directing secretion; the sequence is MKAAVLTLAVLFLTGSQA. Tandem repeats lie at residues 68–89 and 90–111. A 10 X approximate tandem repeats region spans residues 68 to 267; it reads LKLLDNWDSL…EEYAKKLSSQ (200 aa). A Methionine sulfoxide modification is found at methionine 110. A 3; half-length repeat occupies 112-122; the sequence is KDLEEVKAKVQ. Repeat copies occupy residues 123 to 144, 145 to 166, 167 to 188, 189 to 210, and 211 to 232. A 9; half-length repeat occupies 233 to 243; it reads PALEDLRQGLL. Copy 10 of the repeat occupies 244–267; the sequence is PVLESFKVSFLSALEEYAKKLSSQ.

This sequence belongs to the apolipoprotein A1/A4/E family. Homodimer. Interacts with APOA1BP and CLU. Component of a sperm activating protein complex (SPAP), consisting of APOA1, an immunoglobulin heavy chain, an immunoglobulin light chain and albumin. Interacts with NDRG1. Interacts with SCGB3A2. Interacts with NAXE and YJEFN3. Post-translationally, glycosylated. In terms of processing, palmitoylated. Phosphorylation sites are present in the extracellular medium.

Its subcellular location is the secreted. Participates in the reverse transport of cholesterol from tissues to the liver for excretion by promoting cholesterol efflux from tissues and by acting as a cofactor for the lecithin cholesterol acyltransferase (LCAT). As part of the SPAP complex, activates spermatozoa motility. The sequence is that of Apolipoprotein A-I (APOA1) from Cebus imitator (Panamanian white-faced capuchin).